We begin with the raw amino-acid sequence, 347 residues long: Uroporphyrinogen decarboxylase (347 aa).

Substrate-binding positions include 23–27 (RQAGR), D73, Y150, T205, and H323.

This sequence belongs to the uroporphyrinogen decarboxylase family. As to quaternary structure, homodimer.

It localises to the cytoplasm. The enzyme catalyses uroporphyrinogen III + 4 H(+) = coproporphyrinogen III + 4 CO2. It functions in the pathway porphyrin-containing compound metabolism; protoporphyrin-IX biosynthesis; coproporphyrinogen-III from 5-aminolevulinate: step 4/4. Its function is as follows. Catalyzes the decarboxylation of four acetate groups of uroporphyrinogen-III to yield coproporphyrinogen-III. In Ruthia magnifica subsp. Calyptogena magnifica, this protein is Uroporphyrinogen decarboxylase.